Consider the following 210-residue polypeptide: MAKNAMLCLLILSVVLALAFATNKKDDEEPENHSTGIFGKVGRVVTVALAMSSRLGGANATRGGGAVYGRNLKSNQLPNNNWMAPPPPMAMRSAKVYDSKHSPAEYLKKFAQDFRRKTGTHSQRHHEETTLEQEKRGAPAGPDPIHHQDTTFEQEKRGAPAGPDPIHHQDTTLEQEKRVAGAGPDPIHHQDTKFEQEKRGAPAGPDPIHH.

Positions 1–21 (MAKNAMLCLLILSVVLALAFA) are cleaved as a signal peptide. Residues 21 to 83 (ATNKKDDEEP…SNQLPNNNWM (63 aa)) form a required for secretion from the host cytoplasm to the host apoplasm region. Residues Asn-32 and Asn-59 are each glycosylated (N-linked (GlcNAc...) asparagine). Residues 115–210 (RRKTGTHSQR…APAGPDPIHH (96 aa)) form a disordered region. 4 stretches are compositionally biased toward basic and acidic residues: residues 125–137 (HHEETTLEQEKRG), 144–158 (PIHHQDTTFEQEKRG), 165–179 (PIHHQDTTLEQEKRV), and 186–200 (PIHHQDTKFEQEKRG). One copy of the A-1 repeat lies at 127–135 (EETTLEQEK). The 4 X approximate repeat A stretch occupies residues 129–198 (TTLEQEKRGA…HQDTKFEQEK (70 aa)). Residues 136–147 (RGAPAGPDPIHH) form a CLE-1 repeat. The tract at residues 136–210 (RGAPAGPDPI…APAGPDPIHH (75 aa)) is 4 X approximate repeat CLE. The A-2 repeat unit spans residues 148-156 (QDTTFEQEK). The stretch at 157–168 (RGAPAGPDPIHH) is one CLE-2 repeat. The stretch at 169–177 (QDTTLEQEK) is one A-3 repeat. One copy of the CLE-3 repeat lies at 178–189 (RVAGAGPDPIHH). An A-4 repeat occupies 190-198 (QDTKFEQEK). The CLE-4 repeat unit spans residues 199–210 (RGAPAGPDPIHH).

The protein belongs to the CLV3/ESR signal peptide family. Highly expressed exclusively within the dorsal esophageal gland cell during syncytium formation in host plants.

It is found in the secreted. It localises to the host cytoplasm. The protein localises to the host extracellular space. Its subcellular location is the extracellular space. The protein resides in the apoplast. In terms of biological role, mimics host plant CLE extracellular signal peptides that regulate cell fate. May play a role in the differentiation or division of feeding cells (syncytia) induced in plant roots during infection. This is CLAVATA3/ESR (CLE)-related protein 4D (CLE-4D) from Globodera rostochiensis (Golden nematode worm).